The following is a 104-amino-acid chain: L-rhamnose mutarotase (104 aa).

Tyr18 serves as a coordination point for substrate. Residue His22 is the Proton donor of the active site. Residues Tyr41 and 76 to 77 (WW) each bind substrate.

This sequence belongs to the rhamnose mutarotase family. As to quaternary structure, homodimer.

It localises to the cytoplasm. It carries out the reaction alpha-L-rhamnose = beta-L-rhamnose. The protein operates within carbohydrate metabolism; L-rhamnose metabolism. Functionally, involved in the anomeric conversion of L-rhamnose. The chain is L-rhamnose mutarotase from Sinorhizobium fredii (strain NBRC 101917 / NGR234).